Here is a 325-residue protein sequence, read N- to C-terminus: MHTEADPTVWQGRVDAEEGALGQRWHQVVRSADAASPLNGAVALAGFACDAGIARNHGRVGAQAGPAAIRRMLANLPARPGRAIVDAGDVTCRGDALEAAQDALSGVLHGLLDRGAFPIALGGGHELAWASFGGLARHLAARSAQPPRIGILNLDAHFDLRAGERGSSGTPFRQIAEDCARRGWPFRYACLGISAYANTEALFARARQLGVRWLRDDEMDLLHLPRVLQTVDAFLADVDHVYLTICLDVLPAGVAPGVSAPSARGVPMEVIEPIVDRVAASGKLRLADVAELNPSLDIDHRTARVAARLVARVVDGVAPQGAAHG.

Mn(2+) is bound by residues H125, D155, H157, D159, C246, and D248.

The protein belongs to the arginase family. Mn(2+) is required as a cofactor.

It carries out the reaction N-formimidoyl-L-glutamate + H2O = formamide + L-glutamate. It participates in amino-acid degradation; L-histidine degradation into L-glutamate; L-glutamate from N-formimidoyl-L-glutamate (hydrolase route): step 1/1. Functionally, catalyzes the conversion of N-formimidoyl-L-glutamate to L-glutamate and formamide. This Ralstonia nicotianae (strain ATCC BAA-1114 / GMI1000) (Ralstonia solanacearum) protein is Formimidoylglutamase.